Consider the following 306-residue polypeptide: Protein STPG3 (306 aa).

The disordered stretch occupies residues Cys-210–Asn-230.

This Mus musculus (Mouse) protein is Protein STPG3.